A 211-amino-acid chain; its full sequence is Superoxide dismutase [Mn], mitochondrial (211 aa).

A mitochondrion-targeting transit peptide spans 1–24 (MLCRAVCSASRRLAPALGILGVRQ). His-50 serves as a coordination point for Mn(2+). Tyr-58 carries the 3'-nitrotyrosine modification. N6-acetyllysine; alternate is present on residues Lys-68 and Lys-75. N6-succinyllysine; alternate is present on residues Lys-68 and Lys-75. Mn(2+) is bound at residue His-98. Position 114 is an N6-acetyllysine (Lys-114). Lys-122 and Lys-130 each carry N6-acetyllysine; alternate. N6-succinyllysine; alternate occurs at positions 122 and 130. Residues Asp-183 and His-187 each coordinate Mn(2+). Lys-202 is modified (N6-acetyllysine).

Belongs to the iron/manganese superoxide dismutase family. In terms of assembly, homotetramer. Mn(2+) serves as cofactor. Post-translationally, nitrated under oxidative stress. Nitration coupled with oxidation inhibits the catalytic activity. Acetylation at Lys-122 decreases enzymatic activity. Deacetylated by SIRT3 upon exposure to ionizing radiations or after long fasting. In terms of processing, polyubiquitinated; leading to proteasomal degradation. Deubiquitinated by USP36 which increases protein stability.

The protein localises to the mitochondrion matrix. It catalyses the reaction 2 superoxide + 2 H(+) = H2O2 + O2. Its function is as follows. Destroys superoxide anion radicals which are normally produced within the cells and which are toxic to biological systems. The chain is Superoxide dismutase [Mn], mitochondrial (SOD2) from Cavia porcellus (Guinea pig).